We begin with the raw amino-acid sequence, 155 residues long: Ribosome maturation factor RimP (155 aa).

The protein belongs to the RimP family.

The protein resides in the cytoplasm. Functionally, required for maturation of 30S ribosomal subunits. The sequence is that of Ribosome maturation factor RimP from Synechococcus sp. (strain RCC307).